The following is a 150-amino-acid chain: Placenta-specific protein 4 (150 aa).

Expressed in placental syncytiotrophoblast and choriocarcinoma cells.

The protein is Placenta-specific protein 4 (PLAC4) of Homo sapiens (Human).